The primary structure comprises 78 residues: Large ribosomal subunit protein bL28 (78 aa).

Residues 1 to 30 (MAAHCQVTGAQPGFGHSISHSHRRTKRRWN) form a disordered region. Residues 19–30 (SHSHRRTKRRWN) show a composition bias toward basic residues.

The protein belongs to the bacterial ribosomal protein bL28 family.

The polypeptide is Large ribosomal subunit protein bL28 (Kocuria rhizophila (strain ATCC 9341 / DSM 348 / NBRC 103217 / DC2201)).